Consider the following 765-residue polypeptide: Protein PAT1 homolog 1 (765 aa).

Disordered regions lie at residues 1 to 98 (MFRF…DERG), 119 to 147 (GVGS…LAGP), and 210 to 244 (LPNR…SPPV). Over residues 7–30 (LDDDCTLEEEEGLVEEEDEIDQFN) the composition is skewed to acidic residues. Residues 45 to 59 (EEHTRLAELDERVRD) show a composition bias toward basic and acidic residues. Over residues 218–227 (SRDEGRDLSE) the composition is skewed to basic and acidic residues. Residues S235 and S236 each carry the phosphoserine modification. Over residues 235–244 (SSPVIGSPPV) the composition is skewed to low complexity.

Belongs to the PAT1 family. In terms of assembly, interacts with ribonucleoprotein complex components.

The protein resides in the cytoplasm. Its subcellular location is the P-body. The protein localises to the nucleus. It localises to the PML body. It is found in the nucleus speckle. RNA-binding protein involved in deadenylation-dependent decapping of mRNAs, leading to the degradation of mRNAs. Acts as a scaffold protein that connects deadenylation and decapping machinery. Required for cytoplasmic mRNA processing body (P-body) assembly. The sequence is that of Protein PAT1 homolog 1 (patl1) from Danio rerio (Zebrafish).